Reading from the N-terminus, the 476-residue chain is Ankyrin repeat, SAM and basic leucine zipper domain-containing protein 1 (476 aa).

A phosphoserine mark is found at S18 and S21. ANK repeat units follow at residues E46–S75, Y79–F108, D111–V145, R149–T178, N182–L211, and D215–G244. An SAM domain is found at S273–E335.

As to quaternary structure, interacts with DDX4, PIWIL1, RANBP9 and TDRD1.

It localises to the cytoplasm. In terms of biological role, plays a central role during spermatogenesis by repressing transposable elements and preventing their mobilization, which is essential for the germline integrity. Acts via the piRNA metabolic process, which mediates the repression of transposable elements during meiosis by forming complexes composed of piRNAs and Piwi proteins and governs the methylation and subsequent repression of transposons. Its association with pi-bodies suggests a participation in the primary piRNAs metabolic process. Required prior to the pachytene stage to facilitate the production of multiple types of piRNAs, including those associated with repeats involved in the regulation of retrotransposons. May act by mediating protein-protein interactions during germ cell maturation. The sequence is that of Ankyrin repeat, SAM and basic leucine zipper domain-containing protein 1 (ASZ1) from Dasypus novemcinctus (Nine-banded armadillo).